Here is a 261-residue protein sequence, read N- to C-terminus: Malonyl-[acyl-carrier protein] O-methyltransferase (261 aa).

Belongs to the methyltransferase superfamily.

It carries out the reaction malonyl-[ACP] + S-adenosyl-L-methionine = malonyl-[ACP] methyl ester + S-adenosyl-L-homocysteine. It functions in the pathway cofactor biosynthesis; biotin biosynthesis. Its function is as follows. Converts the free carboxyl group of a malonyl-thioester to its methyl ester by transfer of a methyl group from S-adenosyl-L-methionine (SAM). It allows to synthesize pimeloyl-ACP via the fatty acid synthetic pathway. The protein is Malonyl-[acyl-carrier protein] O-methyltransferase of Bacteroides thetaiotaomicron (strain ATCC 29148 / DSM 2079 / JCM 5827 / CCUG 10774 / NCTC 10582 / VPI-5482 / E50).